The sequence spans 227 residues: Dephospho-CoA kinase (227 aa).

The DPCK domain occupies 31–227; sequence KIGLTGGIGS…EKLFQFINCL (197 aa). 39–44 provides a ligand contact to ATP; the sequence is GSGKST.

This sequence belongs to the CoaE family.

It is found in the cytoplasm. It carries out the reaction 3'-dephospho-CoA + ATP = ADP + CoA + H(+). The protein operates within cofactor biosynthesis; coenzyme A biosynthesis; CoA from (R)-pantothenate: step 5/5. Catalyzes the phosphorylation of the 3'-hydroxyl group of dephosphocoenzyme A to form coenzyme A. This chain is Dephospho-CoA kinase, found in Clostridium tetani (strain Massachusetts / E88).